Here is a 475-residue protein sequence, read N- to C-terminus: Aspartyl/glutamyl-tRNA(Asn/Gln) amidotransferase subunit B (475 aa).

Belongs to the GatB/GatE family. GatB subfamily. In terms of assembly, heterotrimer of A, B and C subunits.

It carries out the reaction L-glutamyl-tRNA(Gln) + L-glutamine + ATP + H2O = L-glutaminyl-tRNA(Gln) + L-glutamate + ADP + phosphate + H(+). The catalysed reaction is L-aspartyl-tRNA(Asn) + L-glutamine + ATP + H2O = L-asparaginyl-tRNA(Asn) + L-glutamate + ADP + phosphate + 2 H(+). Its function is as follows. Allows the formation of correctly charged Asn-tRNA(Asn) or Gln-tRNA(Gln) through the transamidation of misacylated Asp-tRNA(Asn) or Glu-tRNA(Gln) in organisms which lack either or both of asparaginyl-tRNA or glutaminyl-tRNA synthetases. The reaction takes place in the presence of glutamine and ATP through an activated phospho-Asp-tRNA(Asn) or phospho-Glu-tRNA(Gln). This Staphylococcus carnosus (strain TM300) protein is Aspartyl/glutamyl-tRNA(Asn/Gln) amidotransferase subunit B.